A 391-amino-acid chain; its full sequence is Putative 8-amino-7-oxononanoate synthase (391 aa).

Substrate contacts are provided by Arg-22 and His-135. Residues Ser-183, 208–211 (DDAH), and 239–242 (TLSK) contribute to the pyridoxal 5'-phosphate site. The residue at position 242 (Lys-242) is an N6-(pyridoxal phosphate)lysine. Thr-358 contributes to the substrate binding site.

Belongs to the class-II pyridoxal-phosphate-dependent aminotransferase family. BioF subfamily. Homodimer. The cofactor is pyridoxal 5'-phosphate.

It catalyses the reaction 6-carboxyhexanoyl-[ACP] + L-alanine + H(+) = (8S)-8-amino-7-oxononanoate + holo-[ACP] + CO2. It participates in cofactor biosynthesis; biotin biosynthesis. Catalyzes the decarboxylative condensation of pimeloyl-[acyl-carrier protein] and L-alanine to produce 8-amino-7-oxononanoate (AON), [acyl-carrier protein], and carbon dioxide. The protein is Putative 8-amino-7-oxononanoate synthase (bioF) of Thermosynechococcus vestitus (strain NIES-2133 / IAM M-273 / BP-1).